The chain runs to 845 residues: Probable inorganic carbon transporter subunit DabA (845 aa).

Positions 1–20 (MPMASGDESMSARSENPVQS) are disordered. Zn(2+) contacts are provided by C345, D347, H516, and C531.

Belongs to the inorganic carbon transporter (TC 9.A.2) DabA family. Forms a complex with DabB. Requires Zn(2+) as cofactor.

The protein localises to the cell inner membrane. In terms of biological role, part of an energy-coupled inorganic carbon pump. In Azotobacter vinelandii (strain DJ / ATCC BAA-1303), this protein is Probable inorganic carbon transporter subunit DabA.